Consider the following 401-residue polypeptide: Large ribosomal subunit protein uL3 (401 aa).

Residues 1 to 21 form a disordered region; it reads MSHRKFSAPRHGHMGFTPKKR.

Belongs to the universal ribosomal protein uL3 family.

It is found in the cytoplasm. Its function is as follows. The L3 protein is a component of the large subunit of cytoplasmic ribosomes. The polypeptide is Large ribosomal subunit protein uL3 (rpl-3) (Caenorhabditis briggsae).